The primary structure comprises 914 residues: DNA mismatch repair protein MutS (914 aa).

The segment at 1–24 is disordered; sequence MDNKTDNKNNLTPQSAPSSAPHKE. Residues 8–18 are compositionally biased toward polar residues; sequence KNNLTPQSAPS. An ATP-binding site is contributed by 662-669; the sequence is GPNMGGKS.

It belongs to the DNA mismatch repair MutS family.

Functionally, this protein is involved in the repair of mismatches in DNA. It is possible that it carries out the mismatch recognition step. This protein has a weak ATPase activity. The protein is DNA mismatch repair protein MutS of Bartonella henselae (strain ATCC 49882 / DSM 28221 / CCUG 30454 / Houston 1) (Rochalimaea henselae).